The chain runs to 319 residues: 7-methylguanosine phosphate-specific 5'-nucleotidase (319 aa).

Catalysis depends on Asp-55, which acts as the Nucleophile. 2 residues coordinate Mg(2+): Asp-55 and Asp-57. Catalysis depends on Asp-57, which acts as the Proton donor. Glu-103 is a binding site for CMP. N(7)-methyl-GMP is bound by residues Glu-103 and Ser-124. Position 171–172 (171–172) interacts with substrate; that stretch reads SA. Asp-245 contacts Mg(2+).

This sequence belongs to the pyrimidine 5'-nucleotidase family. Monomer. Requires Mg(2+) as cofactor.

The catalysed reaction is N(7)-methyl-GMP + H2O = N(7)-methylguanosine + phosphate. It catalyses the reaction CMP + H2O = cytidine + phosphate. It carries out the reaction a ribonucleoside 5'-phosphate + H2O = a ribonucleoside + phosphate. Inhibited by high levels of AMP. In terms of biological role, specifically hydrolyzes 7-methylguanosine monophosphate (m(7)GMP) to 7-methylguanosine and inorganic phosphate. Also able to mediate hydrolysis of diphosphate (m(7)GDP) to 7-methylguanosine and 2 inorganic phosphate with lower activity. The specific activity for m(7)GMP may protect cells against undesired salvage of m(7)GMP and its incorporation into nucleic acids. Also has weak activity for CMP. UMP and purine nucleotides are poor substrates. This Drosophila melanogaster (Fruit fly) protein is 7-methylguanosine phosphate-specific 5'-nucleotidase.